A 231-amino-acid polypeptide reads, in one-letter code: Flagellar L-ring protein (231 aa).

An N-terminal signal peptide occupies residues 1 to 18 (MNRLLSLFALGGAVLLAG). A lipid anchor (N-palmitoyl cysteine) is attached at C19. C19 carries the S-diacylglycerol cysteine lipid modification.

The protein belongs to the FlgH family. As to quaternary structure, the basal body constitutes a major portion of the flagellar organelle and consists of four rings (L,P,S, and M) mounted on a central rod.

Its subcellular location is the cell outer membrane. It localises to the bacterial flagellum basal body. In terms of biological role, assembles around the rod to form the L-ring and probably protects the motor/basal body from shearing forces during rotation. This Pseudomonas putida (strain W619) protein is Flagellar L-ring protein.